The chain runs to 292 residues: ATP synthase gamma chain (292 aa).

The protein belongs to the ATPase gamma chain family. In terms of assembly, F-type ATPases have 2 components, CF(1) - the catalytic core - and CF(0) - the membrane proton channel. CF(1) has five subunits: alpha(3), beta(3), gamma(1), delta(1), epsilon(1). CF(0) has three main subunits: a, b and c.

Its subcellular location is the cell membrane. Produces ATP from ADP in the presence of a proton gradient across the membrane. The gamma chain is believed to be important in regulating ATPase activity and the flow of protons through the CF(0) complex. This Streptococcus mutans serotype c (strain ATCC 700610 / UA159) protein is ATP synthase gamma chain.